A 399-amino-acid polypeptide reads, in one-letter code: S-adenosylmethionine synthase (399 aa).

Position 17 (H17) interacts with ATP. D19 provides a ligand contact to Mg(2+). A K(+)-binding site is contributed by E45. 2 residues coordinate L-methionine: E58 and Q101. The interval Q101–Q111 is flexible loop. Residues D177–K179, R244–F245, D253, R259–K260, A276, and K280 contribute to the ATP site. D253 contributes to the L-methionine binding site. An L-methionine-binding site is contributed by K284.

Belongs to the AdoMet synthase family. Homotetramer; dimer of dimers. It depends on Mg(2+) as a cofactor. K(+) is required as a cofactor.

The protein localises to the cytoplasm. It carries out the reaction L-methionine + ATP + H2O = S-adenosyl-L-methionine + phosphate + diphosphate. It participates in amino-acid biosynthesis; S-adenosyl-L-methionine biosynthesis; S-adenosyl-L-methionine from L-methionine: step 1/1. Functionally, catalyzes the formation of S-adenosylmethionine (AdoMet) from methionine and ATP. The overall synthetic reaction is composed of two sequential steps, AdoMet formation and the subsequent tripolyphosphate hydrolysis which occurs prior to release of AdoMet from the enzyme. The sequence is that of S-adenosylmethionine synthase from Bacillus thuringiensis subsp. konkukian (strain 97-27).